The following is a 149-amino-acid chain: MEVILKKDVDNLGFKDDLVAVKNGYGRNYLIPHGFAELATPSARKVLSETLKQRAYKEQKHIDEAKKQAEKLNNLEIKITAKAGAGDKLFGSITNGDLADALAKEGVEIEKKYISIAGGNIKRLGQYDATLRFHREVISNFSFDVVGDA.

This sequence belongs to the bacterial ribosomal protein bL9 family.

Functionally, binds to the 23S rRNA. This Christiangramia forsetii (strain DSM 17595 / CGMCC 1.15422 / KT0803) (Gramella forsetii) protein is Large ribosomal subunit protein bL9.